Here is a 340-residue protein sequence, read N- to C-terminus: Lipase chaperone (340 aa).

The chain crosses the membrane as a helical span at residues 4-24; it reads ILLLIPLAFAASLAWFVWLEP. The tract at residues 29 to 51 is disordered; it reads ETAPPASPQAGADRAPPAASAGE. Residues 36-51 show a composition bias toward low complexity; the sequence is PQAGADRAPPAASAGE.

This sequence belongs to the lipase chaperone family.

The protein localises to the cell inner membrane. In terms of biological role, may be involved in the folding of the extracellular lipase during its passage through the periplasm. This chain is Lipase chaperone (lifO), found in Pseudomonas aeruginosa (strain ATCC 15692 / DSM 22644 / CIP 104116 / JCM 14847 / LMG 12228 / 1C / PRS 101 / PAO1).